Consider the following 333-residue polypeptide: Fructose-1,6-bisphosphatase class 1 (333 aa).

Positions 92, 113, 115, and 116 each coordinate Mg(2+). Substrate-binding positions include 116–119, Asn209, Tyr242, and Lys272; that span reads DGSS. Glu278 is a binding site for Mg(2+).

This sequence belongs to the FBPase class 1 family. In terms of assembly, homotetramer. Requires Mg(2+) as cofactor.

The protein localises to the cytoplasm. It carries out the reaction beta-D-fructose 1,6-bisphosphate + H2O = beta-D-fructose 6-phosphate + phosphate. The protein operates within carbohydrate biosynthesis; Calvin cycle. This chain is Fructose-1,6-bisphosphatase class 1, found in Chlorobium phaeovibrioides (strain DSM 265 / 1930) (Prosthecochloris vibrioformis (strain DSM 265)).